The sequence spans 146 residues: Prepilin peptidase-dependent protein D (146 aa).

Residues 1 to 6 constitute a propeptide, leader sequence; it reads MDKQRG. Phe7 carries the N-methylphenylalanine modification. The helical transmembrane segment at 7–27 threads the bilayer; that stretch reads FTLIELMVVIGIIAILSAIGI.

The protein belongs to the N-Me-Phe pilin family.

Its subcellular location is the fimbrium. It localises to the membrane. Functionally, major component of the type IV pilus (T4P) that plays a role in cell adhesion and motility. Not produced when grown under standard laboratory conditions. The chain is Prepilin peptidase-dependent protein D (ppdD) from Escherichia coli (strain K12).